Here is a 356-residue protein sequence, read N- to C-terminus: Ferredoxin--NADP reductase (356 aa).

FAD contacts are provided by T25, E44, Q52, Y57, V97, F132, D298, and S339.

Belongs to the ferredoxin--NADP reductase type 2 family. In terms of assembly, homodimer. Requires FAD as cofactor.

It carries out the reaction 2 reduced [2Fe-2S]-[ferredoxin] + NADP(+) + H(+) = 2 oxidized [2Fe-2S]-[ferredoxin] + NADPH. The protein is Ferredoxin--NADP reductase of Chlorobaculum parvum (strain DSM 263 / NCIMB 8327) (Chlorobium vibrioforme subsp. thiosulfatophilum).